A 109-amino-acid chain; its full sequence is MKMKLLQVHFVLLVSSSFLLGYTGMVTAAILSRPQVVFVEDTCRENEIFSQCQASPNCEKSCDNIDIWESVPCIQTKSCVSGCICEDGYVRDKNQGVCILENSCPRVRH.

The first 28 residues, 1 to 28 (MKMKLLQVHFVLLVSSSFLLGYTGMVTA), serve as a signal peptide directing secretion. 5 disulfide bridges follow: Cys-43–Cys-83, Cys-52–Cys-79, Cys-58–Cys-73, Cys-62–Cys-104, and Cys-85–Cys-98. Residues 43 to 104 (CRENEIFSQC…QGVCILENSC (62 aa)) form the TIL domain.

This sequence belongs to the serine protease inhibitor-like (TIL domain-containing) family. Ubiquitously expressed (at protein level), including in venom glands. Found more precisely in the epidermis, fat body, gut, muscle, and venom of worker bees.

The protein localises to the secreted. Functionally, dual role peptide that functions as a broad-spectrum antimicrobial peptide and antifibrinolytic toxin. Inhibits trypsin (IC(50)=375 nM), plasmin (IC(50)=2140 nM), and microbial serine proteases (subtilisin A (IC(50)=294 nM) and proteinase K (IC(50)=459 nM)). Exhibits antifibrinolytic activity by binding and inhibiting plasmin. Does not inhibit chymotrypsin, elastase or thrombin. Binds to microbial cell wall carbohydrates (LPS, mannan and N-acetyl-D-glucosamine) and shows antimicrobial activity (MIC=4.1 uM against B.thuringiensis, MIC=4.95 uM against E.coli, MIC=9.6 uM against the fungus B.bassiana). Does not show hemolytic activity. The sequence is that of Serine protease inhibitor from Bombus ignitus (Bumblebee).